A 427-amino-acid chain; its full sequence is Dihydroorotase (427 aa).

The Zn(2+) site is built by His-60 and His-62. Residues 62–64 and Asn-94 each bind substrate; that span reads HLR. Zn(2+) contacts are provided by Asp-152, His-179, and His-232. Asn-278 contacts substrate. Asp-305 is a Zn(2+) binding site. Residue Asp-305 is part of the active site. Substrate-binding positions include His-309 and 323-324; that span reads FG.

Belongs to the metallo-dependent hydrolases superfamily. DHOase family. Class I DHOase subfamily. The cofactor is Zn(2+).

The catalysed reaction is (S)-dihydroorotate + H2O = N-carbamoyl-L-aspartate + H(+). It functions in the pathway pyrimidine metabolism; UMP biosynthesis via de novo pathway; (S)-dihydroorotate from bicarbonate: step 3/3. Catalyzes the reversible cyclization of carbamoyl aspartate to dihydroorotate. In Geobacillus sp. (strain WCH70), this protein is Dihydroorotase.